The following is a 429-amino-acid chain: Histidinol dehydrogenase (429 aa).

NAD(+) contacts are provided by Tyr127, Gln188, and Asn211. Residues Ser234, Gln256, and His259 each coordinate substrate. Zn(2+) contacts are provided by Gln256 and His259. Catalysis depends on proton acceptor residues Glu324 and His325. Substrate contacts are provided by His325, Asp358, Glu412, and His417. Asp358 provides a ligand contact to Zn(2+). His417 is a binding site for Zn(2+).

It belongs to the histidinol dehydrogenase family. The cofactor is Zn(2+).

The enzyme catalyses L-histidinol + 2 NAD(+) + H2O = L-histidine + 2 NADH + 3 H(+). It participates in amino-acid biosynthesis; L-histidine biosynthesis; L-histidine from 5-phospho-alpha-D-ribose 1-diphosphate: step 9/9. Catalyzes the sequential NAD-dependent oxidations of L-histidinol to L-histidinaldehyde and then to L-histidine. The chain is Histidinol dehydrogenase from Bacillus anthracis.